The primary structure comprises 77 residues: MWHLKLFAVLMICLLLLAQVDGSPIPQQSSAKRRPRRMTPFWRAVSLRPIGASCRDDSECITRLCRKRRCSLSVAQE.

The signal sequence occupies residues 1–22 (MWHLKLFAVLMICLLLLAQVDG). Residues 23–37 (SPIPQQSSAKRRPRR) constitute a propeptide that is removed on maturation. 2 disulfide bridges follow: C54/C65 and C60/C70.

The protein belongs to the LEAP2 family.

The protein localises to the secreted. Its function is as follows. Has an antimicrobial activity. In Bos taurus (Bovine), this protein is Liver-expressed antimicrobial peptide 2 (LEAP2).